Reading from the N-terminus, the 766-residue chain is 1,4-alpha-glucan branching enzyme GlgB (766 aa).

Asp-431 acts as the Nucleophile in catalysis. Glu-484 functions as the Proton donor in the catalytic mechanism.

It belongs to the glycosyl hydrolase 13 family. GlgB subfamily. In terms of assembly, monomer.

The catalysed reaction is Transfers a segment of a (1-&gt;4)-alpha-D-glucan chain to a primary hydroxy group in a similar glucan chain.. It functions in the pathway glycan biosynthesis; glycogen biosynthesis. Functionally, catalyzes the formation of the alpha-1,6-glucosidic linkages in glycogen by scission of a 1,4-alpha-linked oligosaccharide from growing alpha-1,4-glucan chains and the subsequent attachment of the oligosaccharide to the alpha-1,6 position. In Thermosynechococcus vestitus (strain NIES-2133 / IAM M-273 / BP-1), this protein is 1,4-alpha-glucan branching enzyme GlgB.